A 499-amino-acid polypeptide reads, in one-letter code: D-alanine--D-alanyl carrier protein ligase (499 aa).

152–153 (TS) is an ATP binding site. Position 197 (D197) interacts with D-alanine. ATP is bound by residues 292–297 (NTYGPT), D372, 384–387 (YQGR), and K485. Residue K485 coordinates D-alanine.

This sequence belongs to the ATP-dependent AMP-binding enzyme family. DltA subfamily.

Its subcellular location is the cytoplasm. The catalysed reaction is holo-[D-alanyl-carrier protein] + D-alanine + ATP = D-alanyl-[D-alanyl-carrier protein] + AMP + diphosphate. Its pathway is cell wall biogenesis; lipoteichoic acid biosynthesis. Its function is as follows. Catalyzes the first step in the D-alanylation of lipoteichoic acid (LTA), the activation of D-alanine and its transfer onto the D-alanyl carrier protein (Dcp) DltC. In an ATP-dependent two-step reaction, forms a high energy D-alanyl-AMP intermediate, followed by transfer of the D-alanyl residue as a thiol ester to the phosphopantheinyl prosthetic group of the Dcp. D-alanylation of LTA plays an important role in modulating the properties of the cell wall in Gram-positive bacteria, influencing the net charge of the cell wall. The protein is D-alanine--D-alanyl carrier protein ligase of Lactococcus lactis subsp. lactis (strain IL1403) (Streptococcus lactis).